A 141-amino-acid polypeptide reads, in one-letter code: Large ribosomal subunit protein uL11 (141 aa).

The protein belongs to the universal ribosomal protein uL11 family. Part of the ribosomal stalk of the 50S ribosomal subunit. Interacts with L10 and the large rRNA to form the base of the stalk. L10 forms an elongated spine to which L12 dimers bind in a sequential fashion forming a multimeric L10(L12)X complex. One or more lysine residues are methylated.

In terms of biological role, forms part of the ribosomal stalk which helps the ribosome interact with GTP-bound translation factors. This chain is Large ribosomal subunit protein uL11, found in Clostridioides difficile (strain 630) (Peptoclostridium difficile).